The chain runs to 140 residues: Holo-[acyl-carrier-protein] synthase (140 aa).

Positions 8 and 57 each coordinate Mg(2+).

It belongs to the P-Pant transferase superfamily. AcpS family. It depends on Mg(2+) as a cofactor.

It localises to the cytoplasm. It carries out the reaction apo-[ACP] + CoA = holo-[ACP] + adenosine 3',5'-bisphosphate + H(+). In terms of biological role, transfers the 4'-phosphopantetheine moiety from coenzyme A to a Ser of acyl-carrier-protein. This chain is Holo-[acyl-carrier-protein] synthase, found in Beijerinckia indica subsp. indica (strain ATCC 9039 / DSM 1715 / NCIMB 8712).